The primary structure comprises 535 residues: MWKYSNKIIYRNVSGNQLWFNRNSSVGGTLSQQTQLELADSRIDEKWQQARSFGEIPGPSLLRMLSFFMPGGALRNTNLIQMNRLMREMYGDIYCIPGMMGKPNAVFTYNPDDFEMTYRNEGVWPIRIGLESLNYYRKIHRPDVFKGVGGLASDQGQEWADIRNKVNPVLMKVQNVRQNLPQLDQISKEFIDKLETQRNPETHTLTTDFHNQLKMWAFESISFVALNTRMGLLSDNPDPNADRLAKHMRDFFNYSFQFDVQPSIWTFYKTAGFKKFLKTYDNITDITSNYIETAMRGFGKNDDGKTKCVLEQLLEHNKKVAVTMVMDMLMAGIDTTSSACLTILYHLARNPSKQEKLRRELLRILPTTKDSLTDQNTKNMPYLRACIKEGLRITSITPGNFRITPKDLVLSGYQVPRGTGVLMGVLELSNDDKYFAQSSEFIPERWLKSDLAPDIQACPAARTRNPFVYLPFGFGPRTCIGKRIAELEIETLLVRLLRSYKVSWLPETPIEYESTIILSPCGDIRFKLEPVGDLM.

Cysteine 479 contacts heme.

Belongs to the cytochrome P450 family. Heme is required as a cofactor.

It is found in the mitochondrion membrane. This is Probable cytochrome P450 12b2, mitochondrial (Cyp12b2) from Drosophila melanogaster (Fruit fly).